The primary structure comprises 750 residues: MIIRSPEPEVKILVDRDPIKTSFEEWAKPGHFSRTIAKGPDTTTWIWNLHADAHDFDSHTSDLEDISRKIFSAHFGQLSIIFLWLSGMYFHGARFSNYEAWLSDPTHIRPSAQVVWPIVGQEILNGDVGGGFRGIQITSGFFQIWRASGITSELQLYCTAIGGLVFAALMLFAGWFHYHKAAPKLAWFQDVESMLNHHLAGLLGLGSLSWAGHQVHVSLPINQFLNAGVDPKEIPLPHEFILNRDLLAQLYPSFAEGATPFFTLNWAKYADFLTFRGGLDPVTGGLWLTDIAHHHLAIAILFLIAGHMYRTNWGIGHGIKDILEAHKGPFTGQGHKGLYEILTTSWHAQLSINLAMLGSLTIIVAHHMYSMPPYPYLATDYGTQLSLFTHHMWIGGFLIVGAAAHAAIFMVRDYDPTTRYNDLLDRVLRHRDAIISHLNWVCIFLGFHSFGLYIHNDTMSALGRPQDMFSDTAIQLQPIFAQWIQNTHALAPGITAPGATTGTSLTWGGGDLVAVGNKVALLPIPLGTADFLVHHIHAFTIHVTVLILLKGVLFARSSRLIPDKANLGFRFPCDGPGRGGTCQVSAWDHVFLGLFWMYNAISVVIFHFSWKMQSDVWGSISDQGVVTHITGGNFAQSSITINGWLRDFLWAQASQVIQSYGSSLSAYGLFFLGAHFVWAFSLMFLFSGRGYWQELIESIVWAHNKLKVAPATQPRALSIVQGRAVGVTHYLLGGIATTWAFFLARIIAVG.

The next 8 membrane-spanning stretches (helical) occupy residues I70–A93, L156–H179, L195–L219, I291–Y309, W346–Y369, L385–V411, A433–H455, and F531–L549. Residues C573 and C582 each coordinate [4Fe-4S] cluster. 2 helical membrane passes run H589 to W610 and L664 to F686. Chlorophyll a' is bound at residue H675. Chlorophyll a contacts are provided by M683 and Y691. W692 contacts phylloquinone. The chain crosses the membrane as a helical span at residues A724–A744.

It belongs to the PsaA/PsaB family. As to quaternary structure, the PsaA/B heterodimer binds the P700 chlorophyll special pair and subsequent electron acceptors. PSI consists of a core antenna complex that captures photons, and an electron transfer chain that converts photonic excitation into a charge separation. The eukaryotic PSI reaction center is composed of at least 11 subunits. It depends on P700 is a chlorophyll a/chlorophyll a' dimer, A0 is one or more chlorophyll a, A1 is one or both phylloquinones and FX is a shared 4Fe-4S iron-sulfur center. as a cofactor.

The protein localises to the plastid. It is found in the chloroplast thylakoid membrane. The catalysed reaction is reduced [plastocyanin] + hnu + oxidized [2Fe-2S]-[ferredoxin] = oxidized [plastocyanin] + reduced [2Fe-2S]-[ferredoxin]. In terms of biological role, psaA and PsaB bind P700, the primary electron donor of photosystem I (PSI), as well as the electron acceptors A0, A1 and FX. PSI is a plastocyanin-ferredoxin oxidoreductase, converting photonic excitation into a charge separation, which transfers an electron from the donor P700 chlorophyll pair to the spectroscopically characterized acceptors A0, A1, FX, FA and FB in turn. Oxidized P700 is reduced on the lumenal side of the thylakoid membrane by plastocyanin. This is Photosystem I P700 chlorophyll a apoprotein A1 from Lotus japonicus (Lotus corniculatus var. japonicus).